Reading from the N-terminus, the 83-residue chain is Vitellogenesis-inhibiting hormone (83 aa).

3 disulfides stabilise this stretch: C15–C52, C32–C48, and C35–C61.

As to expression, found in the sinus glands of both male and female. Found also in the brain; the neuroendocrine structures of the protocerebrum.

It is found in the secreted. Inhibits secondary vitellogenesis in females. Has no hyperglycemic or molt-inhibiting activity. This Armadillidium vulgare (Pillbug) protein is Vitellogenesis-inhibiting hormone.